The following is a 352-amino-acid chain: Holliday junction branch migration complex subunit RuvB (352 aa).

The interval 13 to 201 (FSLRKKELRL…FGISQKIEFY (189 aa)) is large ATPase domain (RuvB-L). ATP contacts are provided by residues Arg-41, Gly-82, Lys-85, Thr-86, Thr-87, 148–150 (EDF), Arg-191, Tyr-201, and Arg-238. Thr-86 provides a ligand contact to Mg(2+). The segment at 202–273 (TYDELKQIIV…LIKKALNSYQ (72 aa)) is small ATPAse domain (RuvB-S). Residues 276–352 (EKGLDSLDRN…KYIDSKNENF (77 aa)) are head domain (RuvB-H). DNA contacts are provided by Arg-330 and Arg-335.

The protein belongs to the RuvB family. Homohexamer. Forms an RuvA(8)-RuvB(12)-Holliday junction (HJ) complex. HJ DNA is sandwiched between 2 RuvA tetramers; dsDNA enters through RuvA and exits via RuvB. An RuvB hexamer assembles on each DNA strand where it exits the tetramer. Each RuvB hexamer is contacted by two RuvA subunits (via domain III) on 2 adjacent RuvB subunits; this complex drives branch migration. In the full resolvosome a probable DNA-RuvA(4)-RuvB(12)-RuvC(2) complex forms which resolves the HJ.

Its subcellular location is the cytoplasm. It catalyses the reaction ATP + H2O = ADP + phosphate + H(+). Functionally, the RuvA-RuvB-RuvC complex processes Holliday junction (HJ) DNA during genetic recombination and DNA repair, while the RuvA-RuvB complex plays an important role in the rescue of blocked DNA replication forks via replication fork reversal (RFR). RuvA specifically binds to HJ cruciform DNA, conferring on it an open structure. The RuvB hexamer acts as an ATP-dependent pump, pulling dsDNA into and through the RuvAB complex. RuvB forms 2 homohexamers on either side of HJ DNA bound by 1 or 2 RuvA tetramers; 4 subunits per hexamer contact DNA at a time. Coordinated motions by a converter formed by DNA-disengaged RuvB subunits stimulates ATP hydrolysis and nucleotide exchange. Immobilization of the converter enables RuvB to convert the ATP-contained energy into a lever motion, pulling 2 nucleotides of DNA out of the RuvA tetramer per ATP hydrolyzed, thus driving DNA branch migration. The RuvB motors rotate together with the DNA substrate, which together with the progressing nucleotide cycle form the mechanistic basis for DNA recombination by continuous HJ branch migration. Branch migration allows RuvC to scan DNA until it finds its consensus sequence, where it cleaves and resolves cruciform DNA. The chain is Holliday junction branch migration complex subunit RuvB from Prochlorococcus marinus (strain MIT 9215).